Here is a 49-residue protein sequence, read N- to C-terminus: Large ribosomal subunit protein bL33B (49 aa).

Belongs to the bacterial ribosomal protein bL33 family.

The polypeptide is Large ribosomal subunit protein bL33B (Limosilactobacillus reuteri subsp. reuteri (strain JCM 1112) (Lactobacillus reuteri)).